Consider the following 343-residue polypeptide: Dihydroorotate dehydrogenase (quinone) (343 aa).

FMN contacts are provided by residues 61–65 (AGLDK) and T85. K65 is a binding site for substrate. Position 110–114 (110–114 (NRMGF)) interacts with substrate. FMN contacts are provided by N138 and N171. A substrate-binding site is contributed by N171. S174 serves as the catalytic Nucleophile. N176 is a substrate binding site. FMN-binding residues include K216 and T244. 245 to 246 (NT) contributes to the substrate binding site. Residues G267, G296, and 317–318 (YS) each bind FMN.

This sequence belongs to the dihydroorotate dehydrogenase family. Type 2 subfamily. As to quaternary structure, monomer. The cofactor is FMN.

Its subcellular location is the cell membrane. The catalysed reaction is (S)-dihydroorotate + a quinone = orotate + a quinol. The protein operates within pyrimidine metabolism; UMP biosynthesis via de novo pathway; orotate from (S)-dihydroorotate (quinone route): step 1/1. Functionally, catalyzes the conversion of dihydroorotate to orotate with quinone as electron acceptor. The chain is Dihydroorotate dehydrogenase (quinone) from Pseudomonas syringae pv. tomato (strain ATCC BAA-871 / DC3000).